The chain runs to 205 residues: Guanylate kinase (205 aa).

The Guanylate kinase-like domain occupies 6 to 185; that stretch reads GLLIVLSRPS…ACDRIKAIVV (180 aa). 13–20 contacts ATP; that stretch reads RPSGVGKG.

Belongs to the guanylate kinase family.

It localises to the cytoplasm. The catalysed reaction is GMP + ATP = GDP + ADP. Its function is as follows. Essential for recycling GMP and indirectly, cGMP. The protein is Guanylate kinase of Bacillus cereus (strain ATCC 14579 / DSM 31 / CCUG 7414 / JCM 2152 / NBRC 15305 / NCIMB 9373 / NCTC 2599 / NRRL B-3711).